The primary structure comprises 946 residues: Ent-kaur-16-ene synthase (946 aa).

Mg(2+) contacts are provided by Asp-656, Glu-660, Asn-839, Asp-840, Ser-843, and Asp-847. The short motif at 656 to 660 (DEFFE) is the DEXXE motif element.

The protein belongs to the terpene synthase family. The cofactor is Mg(2+).

The enzyme catalyses ent-copalyl diphosphate = ent-kaur-16-ene + diphosphate. It carries out the reaction (2E,6E,10E)-geranylgeranyl diphosphate = ent-copalyl diphosphate. It functions in the pathway plant hormone biosynthesis; gibberellin biosynthesis. In terms of biological role, catalyzes the conversion of geranylgeranyl diphosphate to the gibberellin precursor ent-kaurene diphosphate in a two step process. The protein is Ent-kaur-16-ene synthase of Phaeosphaeria sp. (strain L487).